The sequence spans 103 residues: Large ribosomal subunit protein bL21 (103 aa).

This sequence belongs to the bacterial ribosomal protein bL21 family. Part of the 50S ribosomal subunit. Contacts protein L20.

Its function is as follows. This protein binds to 23S rRNA in the presence of protein L20. The sequence is that of Large ribosomal subunit protein bL21 from Lactobacillus delbrueckii subsp. bulgaricus (strain ATCC 11842 / DSM 20081 / BCRC 10696 / JCM 1002 / NBRC 13953 / NCIMB 11778 / NCTC 12712 / WDCM 00102 / Lb 14).